A 523-amino-acid chain; its full sequence is F-box only protein 31-B (523 aa).

Residues 59–105 (PRSLLQLPPEILVEIFSSLPGTELPSLAQVCRKFRQILTTDTIWKRR) form the F-box domain. The Zn(2+) site is built by Cys201, His209, Cys225, and His231. The tract at residues 372 to 427 (IQREQRQTGNEEDDGKGAGPDRAEHSQQPAPVHRPAKEDVNGVDNADDREQKPPNV) is disordered. Basic and acidic residues-rich tracts occupy residues 386–396 (GKGAGPDRAEH) and 406–423 (PAKEDVNGVDNADDREQK).

The protein belongs to the FBXO31 family. In terms of assembly, part of a SCF (SKP1-cullin-F-box) protein ligase complex SCF(FBXO31).

The protein resides in the cytoplasm. The protein operates within protein modification; protein ubiquitination. Substrate-recognition component of the SCF(FBXO31) protein ligase complex, which specifically mediates the ubiquitination of proteins amidated at their C-terminus in response to oxidative stress, leading to their degradation by the proteasome. Fbxo31 specifically recognizes and binds C-terminal peptides bearing an amide: C-terminal amidation in response to oxidative stress takes place following protein fragmentation. The SCF(FBXO31) also plays a role in G1 arrest following DNA damage by mediating ubiquitination of phosphorylated cyclin-D1 (ccnd1), promoting its degradation by the proteasome, resulting in G1 arrest. The SCF(FBXO31) complex is however not a major regulator of ccnd1 stability during the G1/S transition. The protein is F-box only protein 31-B (fbxo31-b) of Xenopus laevis (African clawed frog).